We begin with the raw amino-acid sequence, 100 residues long: MAKKSIIHRDKKRENLVKKYQEIRNSIKENIKQAKSLNEKWELQKQLQALPRNSSPTRIHRRCFVTGRPRAVYRDFGLSRHVIREMAHSCLLPGVTKSSW.

This sequence belongs to the universal ribosomal protein uS14 family. Part of the 30S ribosomal subunit.

It is found in the plastid. The protein resides in the chloroplast. In terms of biological role, binds 16S rRNA, required for the assembly of 30S particles. This Chaetosphaeridium globosum (Charophycean green alga) protein is Small ribosomal subunit protein uS14c.